A 275-amino-acid chain; its full sequence is Penicillin-insensitive murein endopeptidase (275 aa).

An N-terminal signal peptide occupies residues 1-19 (MKKWIAGLLALIAISPVMA). 3 disulfide bridges follow: cysteine 44/cysteine 264, cysteine 187/cysteine 235, and cysteine 216/cysteine 223. The Zn(2+) site is built by histidine 110, histidine 113, aspartate 120, aspartate 147, and histidine 211. A disordered region spans residues 234–262 (GCGAELESWFQPHQPSAKPGKTLPPPLPP).

Belongs to the peptidase M74 family. Dimer. Zn(2+) is required as a cofactor.

Its subcellular location is the periplasm. Its function is as follows. Murein endopeptidase that cleaves the D-alanyl-meso-2,6-diamino-pimelyl amide bond that connects peptidoglycan strands. Likely plays a role in the removal of murein from the sacculus. The protein is Penicillin-insensitive murein endopeptidase of Yersinia enterocolitica serotype O:8 / biotype 1B (strain NCTC 13174 / 8081).